Here is a 674-residue protein sequence, read N- to C-terminus: MNRINILNADTANKIAAGEVVERPSSVVKELVENSLDAGAKNITIEIQNGGESLIKIIDDGSGVHPEDVEKAFNPHATSKIKDTYDIFSINTLGFRGEALPSIASIARVDFKSKVSDFDMGKELVISGGEKESLTDCSMNRGTQIEVRDLFFNVPARKKFLKTTARESALINDLVNRISLANPDVSFKLFNNNKKILNTYGNGKLIDVIRTIYGKSTAENLIYFEEHKDTASVYGFIGNDTLARASRNNQSLFVNKRYVKNRSLTVAVENAFRSFNVTGKFPFFVLFIDTYPELIDVNIHPTKSEIKFKDERFIFKVVFDAVHSAMREYVKDTFTLPEEEEKKFEALKEEVIQESLDEEISTLEKLKENINYKVSEDRKKEEIYSYNPSKDYEAKTEVNIPVDFLSKENQEESFSINNSLENNNFKEGSAKREISYDPILIKNELKDKVSESTSESLERSDYKCNKNEYGNSIEEIIYREAKFPKLRVIGQFNKTYILAEYDSTLYLIDQHAAHEKILFEKYSSDIAKKRVEIQPLMIPLVVTLPTEDYLYYDENKEIFEKAGFKISDFGDNSIRIEEVPYFLDKLNPTELITSMINNLKKMGTGETVEVKYNKIASMSCRAAVKANDVLSILEMENLIEDLRYINDPFHCPHGRPTIIKFTSYELDKKFKRIT.

Belongs to the DNA mismatch repair MutL/HexB family.

Its function is as follows. This protein is involved in the repair of mismatches in DNA. It is required for dam-dependent methyl-directed DNA mismatch repair. May act as a 'molecular matchmaker', a protein that promotes the formation of a stable complex between two or more DNA-binding proteins in an ATP-dependent manner without itself being part of a final effector complex. This is DNA mismatch repair protein MutL from Clostridium perfringens (strain ATCC 13124 / DSM 756 / JCM 1290 / NCIMB 6125 / NCTC 8237 / Type A).